The primary structure comprises 133 residues: Small ribosomal subunit protein bS6 (133 aa).

The protein belongs to the bacterial ribosomal protein bS6 family.

Functionally, binds together with bS18 to 16S ribosomal RNA. In Chlorobium luteolum (strain DSM 273 / BCRC 81028 / 2530) (Pelodictyon luteolum), this protein is Small ribosomal subunit protein bS6.